A 279-amino-acid polypeptide reads, in one-letter code: Secreted RxLR effector protein 152 (279 aa).

The first 22 residues, 1 to 22 (MRNGSVLFGLFFIGHSCSVLLA), serve as a signal peptide directing secretion. Positions 47–62 (RTLQADDSERTLAEER) match the RxLR-dEER motif.

Belongs to the RxLR effector family.

The protein localises to the secreted. It localises to the host nucleus. Functionally, secreted effector that completely suppresses the host cell death induced by cell death-inducing proteins. The protein is Secreted RxLR effector protein 152 of Plasmopara viticola (Downy mildew of grapevine).